An 85-amino-acid polypeptide reads, in one-letter code: N.vectensis toxin 1 6 (85 aa).

The first 20 residues, 1–20, serve as a signal peptide directing secretion; that stretch reads MASFKIVIVCLALLVAVACA. Residues 21–36 constitute a propeptide that is removed on maturation; it reads RRRDMMSDDELDYHYS. Cystine bridges form between Cys-42–Cys-82, Cys-44–Cys-72, and Cys-65–Cys-83.

It belongs to the sea anemone sodium channel inhibitory toxin family. Type II subfamily. In terms of tissue distribution, expressed in ectodermal glands and in clumps outside of the extodermal layer. Is not expressed in nematocytes. In adult female tissues, shows similar expression levels in mesenteries (gametes-producing tissue), tentacles, pharynx and physa.

It is found in the secreted. In terms of biological role, binds to site 3 of voltage-gated sodium channels and inhibits the inactivation process. Is highly active on DmNav1/TipE (drosophila) and is only extremely weakly active on rat Nav1.4-beta-1/SCN4A-SCN1B, and on human Nav1.5-beta-1/SCN5A-beta-1. This reveals high specificity for arthropod over mammalian channels. In vivo, when released into the medium, this recombinant toxin induces impaired swimming, paralysis and death of the crustacean A.nauplii within several hours. Also causes paralysis of cherry shrimps immediately after injection at very low doses. Its effect on zebrafish (D.rerio) larvae is also rapid, since it induces tail twitching accompanied by impaired swimming after 20 minutes and complete paralysis within 45 minutes. It has also been observed to cause death of zebrafish larvae within 1 hour. This is N.vectensis toxin 1 6 from Nematostella vectensis (Starlet sea anemone).